Here is a 114-residue protein sequence, read N- to C-terminus: Fumarate reductase subunit D (114 aa).

3 consecutive transmembrane segments (helical) span residues valine 24 to leucine 44, leucine 50 to proline 70, and glycine 92 to isoleucine 112.

It belongs to the FrdD family. As to quaternary structure, part of an enzyme complex containing four subunits: a flavoprotein (FrdA), an iron-sulfur protein (FrdB), and two hydrophobic anchor proteins (FrdC and FrdD).

It is found in the cell inner membrane. Functionally, anchors the catalytic components of the fumarate reductase complex to the cell membrane, binds quinones. The chain is Fumarate reductase subunit D from Haemophilus influenzae (strain ATCC 51907 / DSM 11121 / KW20 / Rd).